The primary structure comprises 219 residues: Small ribosomal subunit protein uS3 (219 aa).

The KH type-2 domain maps to isoleucine 38–lysine 106.

Belongs to the universal ribosomal protein uS3 family. Part of the 30S ribosomal subunit. Forms a tight complex with proteins S10 and S14.

Its function is as follows. Binds the lower part of the 30S subunit head. Binds mRNA in the 70S ribosome, positioning it for translation. The polypeptide is Small ribosomal subunit protein uS3 (Levilactobacillus brevis (strain ATCC 367 / BCRC 12310 / CIP 105137 / JCM 1170 / LMG 11437 / NCIMB 947 / NCTC 947) (Lactobacillus brevis)).